A 263-amino-acid polypeptide reads, in one-letter code: Bradykinin-potentiating and C-type natriuretic peptides (263 aa).

A signal peptide spans 1–23 (MFVSRLAASGLLLLALMALSLDG). Residues 24–30 (KPVQQWS) constitute a propeptide that is removed on maturation. Gln-31 carries the pyrrolidone carboxylic acid modification. Residues 42–48 (LVVQQWS) constitute a propeptide that is removed on maturation. At Gln-49 the chain carries Pyrrolidone carboxylic acid. The propeptide occupies 60–66 (LVVQQWS). Gln-67 is modified (pyrrolidone carboxylic acid). A propeptide spanning residues 78–84 (LVVQQWS) is cleaved from the precursor. At Gln-85 the chain carries Pyrrolidone carboxylic acid. The segment at 89–95 (PRPKIPP) is angiotensin-converting enzyme active site binding. The propeptide occupies 96 to 102 (LVVQQWS). Gln-103 carries the pyrrolidone carboxylic acid modification. The segment at 107 to 113 (PRPKIPP) is angiotensin-converting enzyme active site binding. The propeptide occupies 114–116 (LVV). Residue Gln-117 is modified to Pyrrolidone carboxylic acid. The propeptide occupies 128-130 (LLL). The residue at position 131 (Gln-131) is a Pyrrolidone carboxylic acid. The propeptide occupies 137–241 (AGGTTALREE…ARRLKGLVKK (105 aa)). 2 disordered regions span residues 152–171 (EAAS…GSKA) and 177–205 (RLSK…GKQA). Residues 181–192 (SKGASATSASAS) are compositionally biased toward low complexity. Residues 194–204 (PMRDLRTDGKQ) show a composition bias toward basic and acidic residues. Cys-247 and Cys-263 are disulfide-bonded.

The protein in the N-terminal section; belongs to the bradykinin-potentiating peptide family. It in the C-terminal section; belongs to the natriuretic peptide family. Expressed by the venom gland.

The protein resides in the secreted. Functionally, inhibits the rabbit lung angiotensin-converting enzyme (ACE) (IC(50)=15 uM). Contracts the rat gastric fundus smooth muscle in a rapid and transient manner. In terms of biological role, causes no contraction of the rat gastric fundus smooth muscle even at high concentrations. Causes very weak contraction of the isolated guinea pig ileum. Causes weak contraction on rat uterus. Its function is as follows. Inhibits the activity of the angiotensin-converting enzyme (ACE) by a preferential interaction with its C-domain (Ki=30 nM, IC(50)=1.1 uM). It binds ACE in a zinc-independent manner. Also potentiates the hypotensive effects of bradykinin. Causes high contraction of the isolated guinea pig ileum and weak contraction on rat uterus. Inhibits the activity of the angiotensin-converting enzyme (ACE) by interacting with the same potency to its C- and N-domains. Inhibits the rabbit lung angiotensin-converting enzyme (ACE) (IC(50)=7.1 uM). Causes weak contraction of the isolated guinea pig ileum. Causes weak contraction on rat uterus. Functionally, inhibits the rabbit lung angiotensin-converting enzyme (ACE) (IC(50)=46 uM). Synthetic Leu3-blomhotin contracts the rat gastric fundus smooth muscle in a rapid and transient manner. Causes moderate contraction of the isolated guinea pig ileum. Causes weak contraction on rat uterus. In terms of biological role, causes weak contraction of the isolated guinea pig ileum. Causes about 50-fold more potentiating activity on rat uterus than on guinea pig ileum. Its function is as follows. Synthetic peptide potentiates the bradykinin in vivo. Synthetic peptide does not show any bradykinin-potentiating effects. Functionally, has a vasorelaxant activity in rat aortic strips and a diuretic potency in anesthetized rats. May act by activating natriuretic receptors (NPR1 and/or NPR2). The chain is Bradykinin-potentiating and C-type natriuretic peptides from Gloydius blomhoffii (Mamushi).